We begin with the raw amino-acid sequence, 343 residues long: Heat-inducible transcription repressor HrcA (343 aa).

It belongs to the HrcA family.

Functionally, negative regulator of class I heat shock genes (grpE-dnaK-dnaJ and groELS operons). Prevents heat-shock induction of these operons. The sequence is that of Heat-inducible transcription repressor HrcA from Clostridium botulinum (strain Eklund 17B / Type B).